The sequence spans 864 residues: Leucine--tRNA ligase (864 aa).

The 'HIGH' region motif lies at Pro-42–His-52. The short motif at Lys-624–Ser-628 is the 'KMSKS' region element. Lys-627 provides a ligand contact to ATP.

This sequence belongs to the class-I aminoacyl-tRNA synthetase family.

It localises to the cytoplasm. The enzyme catalyses tRNA(Leu) + L-leucine + ATP = L-leucyl-tRNA(Leu) + AMP + diphosphate. The protein is Leucine--tRNA ligase of Burkholderia pseudomallei (strain 668).